A 238-amino-acid chain; its full sequence is Probable transcriptional regulatory protein YeeN (238 aa).

The protein belongs to the TACO1 family. YeeN subfamily.

The protein localises to the cytoplasm. The chain is Probable transcriptional regulatory protein YeeN from Escherichia coli O157:H7.